The primary structure comprises 174 residues: Sarcoplasmic calcium-binding protein (174 aa).

At Ser-1 the chain carries N-acetylserine. 4 consecutive EF-hand domains span residues 3-38, 55-90, 91-126, and 125-160; these read LWVQ…FAKE, GVWD…NAKA, VVEG…LGLN, and LNPD…FFIN. Residues Asp-16, Asp-18, Asp-20, and Asp-27 each contribute to the Ca(2+) site. Ca(2+)-binding residues include Asp-104, Asn-106, Asp-108, Met-110, Glu-115, Asp-138, Asn-140, Asp-142, and Glu-149.

Like parvalbumins, SCPs seem to be more abundant in fast contracting muscles, but no functional relationship can be established from this distribution. The sequence is that of Sarcoplasmic calcium-binding protein from Perinereis vancaurica tetradentata (Sandworm).